A 1882-amino-acid chain; its full sequence is RNA2 polyprotein (1882 aa).

2 consecutive repeat copies span residues Ser-554–Phe-606 and Ser-607–Phe-659. Residues Ser-554–Pro-698 are 2.5 X tandem repeats, Pro-rich. One copy of the 3; truncated and approximate repeat lies at Ser-660–Pro-698. 2 stretches are compositionally biased toward polar residues: residues Ser-1289 to Thr-1303 and Pro-1838 to Pro-1847. Disordered stretches follow at residues Ser-1289 to Gln-1320 and Pro-1838 to Gln-1863.

Belongs to the nepoviruses RNA2 polyprotein family. Post-translationally, specific enzymatic cleavages in vivo by the P1 encoded 3C-like protease yield mature proteins.

It localises to the host cell junction. Its subcellular location is the host plasmodesma. The protein localises to the virion. In terms of biological role, protein 2A: implicated in RNA2 replication. Could also be required for nematode transmission of the virus. Its function is as follows. Transports viral genome to neighboring plant cells directly through plasmosdesmata, without any budding. The movement protein allows efficient cell to cell propagation, by bypassing the host cell wall barrier. Acts by forming a tubular structure at the host plasmodesmata, enlarging it enough to allow free passage of virion capsids. The protein is RNA2 polyprotein of Tomato ringspot virus (isolate raspberry) (ToRSV).